A 147-amino-acid chain; its full sequence is Putative pre-16S rRNA nuclease (147 aa).

Belongs to the YqgF nuclease family.

The protein localises to the cytoplasm. In terms of biological role, could be a nuclease involved in processing of the 5'-end of pre-16S rRNA. The sequence is that of Putative pre-16S rRNA nuclease from Limosilactobacillus reuteri (strain DSM 20016) (Lactobacillus reuteri).